The chain runs to 380 residues: Beta sliding clamp (380 aa).

Belongs to the beta sliding clamp family. In terms of assembly, forms a ring-shaped head-to-tail homodimer around DNA which binds and tethers DNA polymerases and other proteins to the DNA. The DNA replisome complex has a single clamp-loading complex (3 tau and 1 each of delta, delta', psi and chi subunits) which binds 3 Pol III cores (1 core on the leading strand and 2 on the lagging strand) each with a beta sliding clamp dimer. Additional proteins in the replisome are other copies of gamma, psi and chi, Ssb, DNA helicase and RNA primase.

It localises to the cytoplasm. Confers DNA tethering and processivity to DNA polymerases and other proteins. Acts as a clamp, forming a ring around DNA (a reaction catalyzed by the clamp-loading complex) which diffuses in an ATP-independent manner freely and bidirectionally along dsDNA. Initially characterized for its ability to contact the catalytic subunit of DNA polymerase III (Pol III), a complex, multichain enzyme responsible for most of the replicative synthesis in bacteria; Pol III exhibits 3'-5' exonuclease proofreading activity. The beta chain is required for initiation of replication as well as for processivity of DNA replication. In Mycoplasma pneumoniae (strain ATCC 29342 / M129 / Subtype 1) (Mycoplasmoides pneumoniae), this protein is Beta sliding clamp (dnaN).